Consider the following 646-residue polypeptide: Epithelial sodium channel subunit beta-2 (646 aa).

Topologically, residues 1–57 (MIQGKLKRLKRYFTRALHRIQKGPGYTYKELLVWFCDNTNTHGPKRIIKEGPKKRVM) are cytoplasmic. Residues 58–78 (WFILTLVFAGLVFWQWGLLIL) form a helical membrane-spanning segment. At 79–551 (TYLSYGVSVS…GGQFGFWMGG (473 aa)) the chain is on the extracellular side. Disulfide bonds link C104/C290, C214/C221, C267/C274, C380/C467, C405/C463, C409/C459, C418/C445, and C420/C434. A helical membrane pass occupies residues 552–572 (SVLCIIEFGEIIIDCMWITIL). Topologically, residues 573–646 (KLLAWIRNRR…IEPVSSDEEN (74 aa)) are cytoplasmic. The disordered stretch occupies residues 586–646 (QRPQYADPPP…IEPVSSDEEN (61 aa)). A compositionally biased stretch (basic and acidic residues) spans 610 to 619 (QHDDGNHVTE).

It belongs to the amiloride-sensitive sodium channel (TC 1.A.6) family. SCNN1B subfamily. In terms of assembly, component of the heterotrimeric epithelial sodium channel (ENaC) composed of an alpha/SCNN1A, a beta/SCNN1B and a gamma/SCNN1G subunit.

It localises to the apical cell membrane. The protein resides in the cytoplasmic vesicle membrane. The catalysed reaction is Na(+)(in) = Na(+)(out). Its activity is regulated as follows. Originally identified and characterized by its inhibition by the diuretic drug amiloride. Functionally, this is one of the three pore-forming subunits of the heterotrimeric epithelial sodium channel (ENaC), a critical regulator of sodium balance and fluid homeostasis. ENaC operates in epithelial tissues, where it mediates the electrodiffusion of sodium ions from extracellular fluid through the apical membrane of cells, with water following osmotically. The polypeptide is Epithelial sodium channel subunit beta-2 (scnn1b-b) (Xenopus laevis (African clawed frog)).